The primary structure comprises 333 residues: Fructose-1,6-bisphosphatase class 1 1 (333 aa).

Mg(2+) is bound by residues Glu-81, Asp-100, Leu-102, and Asp-103. Substrate contacts are provided by residues 103 to 106 (DGSS) and Asn-191. Glu-263 contributes to the Mg(2+) binding site.

The protein belongs to the FBPase class 1 family. In terms of assembly, homotetramer. The cofactor is Mg(2+).

The protein resides in the cytoplasm. It catalyses the reaction beta-D-fructose 1,6-bisphosphate + H2O = beta-D-fructose 6-phosphate + phosphate. Its pathway is carbohydrate biosynthesis; Calvin cycle. In Cereibacter sphaeroides (strain ATCC 17025 / ATH 2.4.3) (Rhodobacter sphaeroides), this protein is Fructose-1,6-bisphosphatase class 1 1.